The sequence spans 295 residues: Protein PAR32 (295 aa).

A2 is subject to N-acetylalanine. 7 positions are modified to phosphoserine: S36, S39, S47, S123, S138, S141, and S147. The segment covering 134 to 153 has biased composition (polar residues); the sequence is SATRSHQSLHATTSSPNNNA. Disordered stretches follow at residues 134–156 and 217–295; these read SATR…APIV and TSKK…TMFN. Positions 217–227 are enriched in basic residues; the sequence is TSKKPKNKLKG. S246 is modified (phosphoserine). Positions 246–256 are enriched in polar residues; that stretch reads SPKSSRNTINH. Over residues 265 to 274 the composition is skewed to basic and acidic residues; it reads KFNLKDDNGK. Residues 275–284 show a composition bias toward basic residues; that stretch reads EKKKKKKKKS. Low complexity predominate over residues 285–295; sequence GFFSSLKTMFN.

Hyperphosphorylated after treatment with rapamycin in a TAP42-dependent manner.

It localises to the cytoplasm. Involved in resistance to cisplatin. This is Protein PAR32 (PAR32) from Saccharomyces cerevisiae (strain ATCC 204508 / S288c) (Baker's yeast).